We begin with the raw amino-acid sequence, 164 residues long: C-phycoerythrin class 1 subunit alpha (164 aa).

(2R,3E)-phycoerythrobilin contacts are provided by C82 and C139.

The protein belongs to the phycobiliprotein family. As to quaternary structure, heterodimer of an alpha and a beta chain. In terms of processing, contains two covalently linked phycoerythrobilin chromophores.

Its subcellular location is the cellular thylakoid membrane. In terms of biological role, light-harvesting photosynthetic bile pigment-protein from the phycobiliprotein complex. The chain is C-phycoerythrin class 1 subunit alpha (cpeA) from Synechococcus sp. (strain WH8020).